The sequence spans 147 residues: Hemoglobin subunit beta-2 (147 aa).

Val2 bears the N-acetylvaline mark. The 145-residue stretch at 3–147 folds into the Globin domain; that stretch reads HLTDAEKSAV…VATALAHKYH (145 aa). Lys18 is modified (N6-succinyllysine). At Tyr42 the chain carries Phosphotyrosine. Ser45, Ser51, and Ser53 each carry phosphoserine. Lys60 is modified (N6-succinyllysine). Residues His64 and His93 each coordinate heme b. Arg105 is subject to Asymmetric dimethylarginine. Phosphothreonine is present on Thr124.

It belongs to the globin family. In terms of assembly, heterotetramer of two alpha chains and two beta chains. As to expression, red blood cells.

Its function is as follows. Involved in oxygen transport from the lung to the various peripheral tissues. The polypeptide is Hemoglobin subunit beta-2 (Hbb-b2) (Mus musculus (Mouse)).